The chain runs to 478 residues: Ninja-family protein 7 (478 aa).

Disordered regions lie at residues 1 to 247, 336 to 374, and 454 to 478; these read MDDD…LTPG, SFTAKDKADQTGTKQVDDGKKPREAGASSSAHAEDEKKA, and DAPAQDNSATLPAFPAGNQATSAEN. Basic and acidic residues predominate over residues 23 to 35; the sequence is KARDAPLEPKAEP. Over residues 169-179 the composition is skewed to polar residues; sequence ISISTDDGSTG. A compositionally biased stretch (acidic residues) spans 180 to 189; the sequence is ENEDVAESEA. Positions 233-242 are enriched in low complexity; it reads SFSGSESSSG. Residues 339 to 359 show a composition bias toward basic and acidic residues; the sequence is AKDKADQTGTKQVDDGKKPRE.

The protein belongs to the Ninja family.

The protein resides in the nucleus. The chain is Ninja-family protein 7 from Zea mays (Maize).